Consider the following 359-residue polypeptide: Methyltransferase eqxD (359 aa).

S-adenosyl-L-methionine is bound by residues 198-199 (GG), Asp224, 248-249 (SF), Arg264, and Arg265.

It belongs to the class I-like SAM-binding methyltransferase superfamily. Cation-independent O-methyltransferase family.

It carries out the reaction trichosetin + S-adenosyl-L-methionine = equisetin + S-adenosyl-L-homocysteine + H(+). Its pathway is mycotoxin biosynthesis. Its function is as follows. Methyltransferase; part of the gene cluster that mediates the biosynthesis of equisetin, a trans-fused decalin-containing tetramic acid with antimicrobial activity. The PKS module of eqxS together with the enoylreductase eqxC catalyze the formation of the polyketide unit which is then conjugated to L-serine by the condensation domain of the eqxS NRPS module. Activity of the Dieckmann cyclase domain (RED) results in release of the Dieckmann product intermediate. Diels-Alderase eqx3 is involved in endo-selective Diels-Alder cycloaddition to form the decalin ring, leading to the production of N-desmethylequisetin also called trichosetin. Subsequent N-methylation is carried out by eqxD to give equisetin. The protein is Methyltransferase eqxD of Fusarium heterosporum.